The sequence spans 66 residues: Putative alpha-neurotoxin RjAa16 (66 aa).

Residues 1–60 (KEGYPVDWGNCKYECMSDAYCKDLCVDRKAKSGYCYKLNWFCYCEGLPDDSPIKTNGHCR) enclose the LCN-type CS-alpha/beta domain. Disulfide bonds link Cys11–Cys59, Cys15–Cys35, Cys21–Cys42, and Cys25–Cys44.

Belongs to the long (4 C-C) scorpion toxin superfamily. Sodium channel inhibitor family. Alpha subfamily. Expressed by the venom gland.

It localises to the secreted. In terms of biological role, alpha toxins bind voltage-independently at site-3 of sodium channels (Nav) and inhibits the inactivation of the activated channels, thereby blocking neuronal transmission. This Rhopalurus junceus (Caribbean blue scorpion) protein is Putative alpha-neurotoxin RjAa16.